The chain runs to 518 residues: Voltage-gated potassium channel regulatory subunit KCNG2 (518 aa).

The Cytoplasmic segment spans residues 1–214 (MALLTGNADR…DMVENPHSGI (214 aa)). A helical transmembrane segment spans residues 215 to 236 (PGKIFACISISFVAITAVSLCI). The Extracellular segment spans residues 237–257 (STMPDVREEEDRGECSQKCYD). Residues 258-279 (IFVLETVCVAWFSFEFLLRSIQ) traverse the membrane as a helical segment. At 280-290 (AENKCAFLKTP) the chain is on the cytoplasmic side. A helical transmembrane segment spans residues 291–311 (LNIIDILAILPFYISLIVDMA). The Extracellular portion of the chain corresponds to 312-331 (STKNSSKPGGGAGNKYLERV). The chain crosses the membrane as a helical; Voltage-sensor span at residues 332–352 (GLVLRFLRALRILYVMRLARH). Over 353–367 (SLGLQTLGLTVRRCT) the chain is Cytoplasmic. The helical transmembrane segment at 368–389 (REFGLLLLFLCVAMALFSPLVY) threads the bilayer. The Extracellular portion of the chain corresponds to 390–404 (LAESELGAKQEFTSI). An intramembrane region (helical) is located at residues 405-416 (PTSYWWAVISMT). A Selectivity filter motif is present at residues 417–422 (TVGYGD). An intramembrane segment occupies 417-424 (TVGYGDMV). Residues 425–431 (PRSIPGQ) lie on the Extracellular side of the membrane. A helical transmembrane segment spans residues 432 to 460 (VVALSSILSGILLMAFPVTSIFHTFSRSY). The Cytoplasmic segment spans residues 461–518 (SELKEQQQRAASRQMHQLEESTKLAGGGSSQWITAASPPDAAREDGRPELDQEAKRSC). The interval 473 to 518 (RQMHQLEESTKLAGGGSSQWITAASPPDAAREDGRPELDQEAKRSC) is disordered. Basic and acidic residues predominate over residues 501–518 (AAREDGRPELDQEAKRSC).

Belongs to the potassium channel family. G (TC 1.A.1.2) subfamily. Kv6.2/KCNG2 sub-subfamily. In terms of assembly, heterodimer with KCNB1.

Its subcellular location is the cell membrane. Functionally, regulatory alpha-subunit of the voltage-gated potassium (Kv) channel which, when coassembled with KCNB1, can modulate the kinetics and conductance-voltage relationship. Modulates channel activity by shifting the threshold and the half-maximal activation to more negative values. Potassium channel subunit that does not form functional channels by itself. This Gallus gallus (Chicken) protein is Voltage-gated potassium channel regulatory subunit KCNG2.